A 274-amino-acid chain; its full sequence is uncharacterized protein (274 aa).

Positions methionine 1–asparagine 17 are enriched in low complexity. 2 disordered regions span residues methionine 1–arginine 38 and glutamate 222–glutamate 274. Polar residues predominate over residues leucine 18 to glutamine 28. Residues proline 29 to arginine 38 show a composition bias toward basic and acidic residues. 2 stretches are compositionally biased toward polar residues: residues proline 239 to isoleucine 249 and serine 256 to valine 265.

This is an uncharacterized protein from Caenorhabditis elegans.